Reading from the N-terminus, the 134-residue chain is Small ribosomal subunit protein uS9c (134 aa).

This sequence belongs to the universal ribosomal protein uS9 family.

It is found in the plastid. Its subcellular location is the chloroplast. The sequence is that of Small ribosomal subunit protein uS9c (rps9) from Guillardia theta (Cryptophyte).